The chain runs to 325 residues: NADH-quinone oxidoreductase subunit H (325 aa).

8 helical membrane passes run isoleucine 11–phenylalanine 31, valine 81–valine 101, isoleucine 114–glycine 134, leucine 154–phenylalanine 174, valine 186–valine 206, phenylalanine 237–phenylalanine 257, leucine 265–isoleucine 285, and isoleucine 304–alanine 324.

It belongs to the complex I subunit 1 family. As to quaternary structure, NDH-1 is composed of 13 different subunits. Subunits NuoA, H, J, K, L, M, N constitute the membrane sector of the complex.

The protein resides in the cell inner membrane. It catalyses the reaction a quinone + NADH + 5 H(+)(in) = a quinol + NAD(+) + 4 H(+)(out). Functionally, NDH-1 shuttles electrons from NADH, via FMN and iron-sulfur (Fe-S) centers, to quinones in the respiratory chain. The immediate electron acceptor for the enzyme in this species is believed to be ubiquinone. Couples the redox reaction to proton translocation (for every two electrons transferred, four hydrogen ions are translocated across the cytoplasmic membrane), and thus conserves the redox energy in a proton gradient. This subunit may bind ubiquinone. This chain is NADH-quinone oxidoreductase subunit H, found in Escherichia coli O139:H28 (strain E24377A / ETEC).